We begin with the raw amino-acid sequence, 677 residues long: DNA ligase (677 aa).

Residues Asp-34–Asp-38, Ser-84–Leu-85, and Glu-118 contribute to the NAD(+) site. Residue Lys-120 is the N6-AMP-lysine intermediate of the active site. NAD(+) contacts are provided by Arg-141, Glu-176, Lys-283, and Lys-307. The Zn(2+) site is built by Cys-403, Cys-406, Cys-421, and Cys-427. The BRCT domain occupies Glu-594 to Glu-677.

The protein belongs to the NAD-dependent DNA ligase family. LigA subfamily. Requires Mg(2+) as cofactor. The cofactor is Mn(2+).

It catalyses the reaction NAD(+) + (deoxyribonucleotide)n-3'-hydroxyl + 5'-phospho-(deoxyribonucleotide)m = (deoxyribonucleotide)n+m + AMP + beta-nicotinamide D-nucleotide.. Its function is as follows. DNA ligase that catalyzes the formation of phosphodiester linkages between 5'-phosphoryl and 3'-hydroxyl groups in double-stranded DNA using NAD as a coenzyme and as the energy source for the reaction. It is essential for DNA replication and repair of damaged DNA. This Anaplasma phagocytophilum (strain HZ) protein is DNA ligase.